Here is a 347-residue protein sequence, read N- to C-terminus: MNFPCIYHVYSIRKIMFLVIVACLPGIFAKYYFFGIGTLIQIFFSIFISLVLEIIILKIRSKNIKNYLQDTSLVLTSVLFGVSIPPLLPWWMTSIGLFFAIVVAKHLYGGIGQNIFNPAMVGYAVLLISFPVYMNNWNERDFSLSFFNDFKKSAYIIFFKNDITTVSSSYLNIIPDAFTTATPLNNFKIKSHLKDDFFLKENIIKNKEVSIQTSWKCINISFFLGGIFLLFTKIICWRIPISFLSSLGMLSIITYFYSKELFMSPQVHFFSGGTMICAFFIATDPVTAACNNVGKIVFGIIIGFLVWIIRNYSDYPDAIAFSVLFANMTVPLVDYYTKSSGYGRNNI.

4 consecutive transmembrane segments (helical) span residues 15–35 (IMFL…YFFG), 36–56 (IGTL…EIII), 84–104 (IPPL…IVVA), and 114–134 (NIFN…PVYM). The residue at position 182 (threonine 182) is an FMN phosphoryl threonine. 5 helical membrane-spanning segments follow: residues 217 to 237 (CINI…IICW), 239 to 259 (IPIS…FYSK), 261 to 281 (LFMS…AFFI), 289 to 309 (ACNN…VWII), and 315 to 335 (YPDA…LVDY).

This sequence belongs to the NqrB/RnfD family. The complex is composed of six subunits: RnfA, RnfB, RnfC, RnfD, RnfE and RnfG. It depends on FMN as a cofactor.

The protein resides in the cell inner membrane. In terms of biological role, part of a membrane-bound complex that couples electron transfer with translocation of ions across the membrane. The sequence is that of Ion-translocating oxidoreductase complex subunit D from Buchnera aphidicola subsp. Acyrthosiphon pisum (strain 5A).